The following is a 94-amino-acid chain: Progonadoliberin-3 (94 aa).

The first 23 residues, 1-23, serve as a signal peptide directing secretion; it reads MEWKGRVLVQLLMLVCVLEVSLC. The residue at position 24 (glutamine 24) is a Pyrrolidone carboxylic acid. At glycine 33 the chain carries Glycine amide.

It belongs to the GnRH family.

The protein resides in the secreted. Stimulates the secretion of gonadotropins. The protein is Progonadoliberin-3 (gnrh3) of Rutilus rutilus (Roach).